A 94-amino-acid chain; its full sequence is MFGHTSVSFLLLSIVALGMVATVICSCDSEFSSEFCEQPEERICSCSTHVCCHLSSSKRDQCMTWNRCLSAQTGNRRSTHMQKRFLRMPRDLAD.

A signal peptide spans Met-1–Cys-25. Glu-30, Glu-34, Glu-37, Glu-40, and Glu-41 each carry 4-carboxyglutamate. The propeptide occupies Ser-78–Asp-94.

It belongs to the conotoxin I2 superfamily. Post-translationally, contains 4 disulfide bonds. Expressed by the venom duct.

It localises to the secreted. The chain is Conotoxin Gla-MrII from Conus marmoreus (Marble cone).